Reading from the N-terminus, the 230-residue chain is Ureidoacrylate amidohydrolase RutB (230 aa).

The active-site Proton acceptor is the Asp-24. Lys-133 is an active-site residue. Cys-166 (nucleophile) is an active-site residue.

It belongs to the isochorismatase family. RutB subfamily.

It catalyses the reaction (Z)-3-ureidoacrylate + H2O + H(+) = (Z)-3-aminoacrylate + NH4(+) + CO2. The catalysed reaction is (Z)-3-ureidoacrylate + H2O = (Z)-3-aminoacrylate + carbamate + H(+). The enzyme catalyses (Z)-2-methylureidoacrylate + H2O + H(+) = (Z)-2-methylaminoacrylate + NH4(+) + CO2. Hydrolyzes ureidoacrylate to form aminoacrylate and carbamate. The carbamate hydrolyzes spontaneously, thereby releasing one of the nitrogen atoms of the pyrimidine ring as ammonia and one of its carbon atoms as CO2. In Escherichia coli (strain K12 / MC4100 / BW2952), this protein is Ureidoacrylate amidohydrolase RutB.